The sequence spans 135 residues: Succinate dehydrogenase assembly factor 3, mitochondrial (135 aa).

The segment at 73 to 101 is disordered; it reads KENSNNNDNYNNNNNDNNNDNNNFINIGQ. The segment covering 75 to 95 has biased composition (low complexity); that stretch reads NSNNNDNYNNNNNDNNNDNNN.

Belongs to the complex I LYR family. SDHAF3 subfamily. In terms of assembly, interacts with the iron-sulfur protein subunit within the SDH catalytic dimer.

Its subcellular location is the mitochondrion matrix. In terms of biological role, plays an essential role in the assembly of succinate dehydrogenase (SDH), an enzyme complex (also referred to as respiratory complex II) that is a component of both the tricarboxylic acid (TCA) cycle and the mitochondrial electron transport chain, and which couples the oxidation of succinate to fumarate with the reduction of ubiquinone (coenzyme Q) to ubiquinol. Promotes maturation of the iron-sulfur protein subunit of the SDH catalytic dimer, protecting it from the deleterious effects of oxidants. May act together with SDHAF1. The polypeptide is Succinate dehydrogenase assembly factor 3, mitochondrial (acn9) (Dictyostelium discoideum (Social amoeba)).